The chain runs to 229 residues: Enolase-phosphatase E1 (229 aa).

A disordered region spans residues 207–229; sequence RDPASHHPQVQRFDDIHPEQIPA. A compositionally biased stretch (basic and acidic residues) spans 218–229; the sequence is RFDDIHPEQIPA.

It belongs to the HAD-like hydrolase superfamily. MasA/MtnC family. In terms of assembly, monomer. It depends on Mg(2+) as a cofactor.

The catalysed reaction is 5-methylsulfanyl-2,3-dioxopentyl phosphate + H2O = 1,2-dihydroxy-5-(methylsulfanyl)pent-1-en-3-one + phosphate. Its pathway is amino-acid biosynthesis; L-methionine biosynthesis via salvage pathway; L-methionine from S-methyl-5-thio-alpha-D-ribose 1-phosphate: step 3/6. The protein operates within amino-acid biosynthesis; L-methionine biosynthesis via salvage pathway; L-methionine from S-methyl-5-thio-alpha-D-ribose 1-phosphate: step 4/6. Bifunctional enzyme that catalyzes the enolization of 2,3-diketo-5-methylthiopentyl-1-phosphate (DK-MTP-1-P) into the intermediate 2-hydroxy-3-keto-5-methylthiopentenyl-1-phosphate (HK-MTPenyl-1-P), which is then dephosphorylated to form the acireductone 1,2-dihydroxy-3-keto-5-methylthiopentene (DHK-MTPene). The protein is Enolase-phosphatase E1 of Klebsiella pneumoniae (strain 342).